The chain runs to 396 residues: Protein PIN-LIKES 5 (396 aa).

Over 1 to 5 the chain is Lumenal; that stretch reads MGFWS. A helical transmembrane segment spans residues 6–26; sequence LLEVASMPVIQVLFMSLVGAF. Topologically, residues 27–45 are cytoplasmic; sequence MASDRCKLFPVEARNSMNK. A helical transmembrane segment spans residues 46 to 66; that stretch reads VVFVLFAPALMFANLAQTVTL. At 67 to 73 the chain is on the lumenal side; that stretch reads EDIISWW. Residues 74-94 form a helical membrane-spanning segment; the sequence is FMPVNMGLTFLIGGLLGWLVV. Residues 95-106 are Cytoplasmic-facing; the sequence is KILKPPPYLEGL. A helical membrane pass occupies residues 107–127; that stretch reads IVATCSAGNMGNLPIILVPAI. Topologically, residues 128–144 are lumenal; the sequence is CDEDKSPFGNRSVCRTV. A helical transmembrane segment spans residues 145–165; the sequence is GLSYASFSMALGGFYIWTYTF. Residues 166–229 lie on the Cytoplasmic side of the membrane; the sequence is RLIKGSAMKV…WRKGVDFLHE (64 aa). The helical transmembrane segment at 230-250 threads the bilayer; sequence ILEELLAPPTLGAIIGFIFGA. The Lumenal segment spans residues 251-273; sequence VRWLRNLIIGDDAPLRIVQSTAK. Residues 274–294 traverse the membrane as a helical segment; that stretch reads LLGDGTIPCMTIILGGNLIQG. The Cytoplasmic portion of the chain corresponds to 295 to 312; the sequence is LRSSAVKPMVVLGIVCVR. A helical transmembrane segment spans residues 313–333; that stretch reads YIAMPIIGIGIVLTAANLGFL. The Lumenal segment spans residues 334–337; it reads PADP. The chain crosses the membrane as a helical span at residues 338–358; it reads LFQYVLMLQFTLPPAMNIGTM. The Cytoplasmic portion of the chain corresponds to 359-370; sequence TQLYNVAQDECS. A helical membrane pass occupies residues 371–391; that stretch reads VLMLWTYLVAILALTVWSTIF. At 392–396 the chain is on the lumenal side; the sequence is LHLLV.

Belongs to the auxin efflux carrier (TC 2.A.69.2) family. In terms of tissue distribution, expressed in seedlings, cauline leaves and flowers.

The protein resides in the endoplasmic reticulum membrane. In terms of biological role, involved in cellular auxin homeostasis by regulating auxin metabolism. Regulates intracellular auxin accumulation at the endoplasmic reticulum and thus auxin availability for nuclear auxin signaling. The sequence is that of Protein PIN-LIKES 5 from Arabidopsis thaliana (Mouse-ear cress).